A 110-amino-acid chain; its full sequence is Small ribosomal subunit protein bS16 (110 aa).

The segment at 87–110 (ARNNPEKAVPRKERKAAAEAAAKK) is disordered.

Belongs to the bacterial ribosomal protein bS16 family.

The polypeptide is Small ribosomal subunit protein bS16 (Rhodopseudomonas palustris (strain BisA53)).